Consider the following 687-residue polypeptide: MKKADAAARARDLRERIRAADHAYYVLDQPVLADAEYDRLMHELQAIEAEHPELVTADSPTQRVSGAPSERFERVVHREPMLSLGNVQSDDELHEFDARVRRLLGLPEGEAVGYVVEPKLDGLAVELVYRDGAFTGGSTRGDGVNGEDVTANLRVVGGLGANRGVPHALEGTPPPRVEVRGEVLLFKEHFEAMNRQLVRAGDEPFANPRNAAAGTLRQLDWRVTARRPLSFVAYEALVPGGDPWRTHWEKLEALAAWGFETNPENRRCRGLGEVLAYRDRMAERRFELPYDTDGIVVKVDDLDWRRRLGAASKFPRWAVAFKYPPQEEATRIRRIWASVGRTGVLTPVVDFDPVRLSGAMVARATLHNEDEMRRKDILEGDWVLVRRAGEVIPEVVKPLPERRTGEERPFRFPAECPVCGARVVREEGEKVYRCTGAACPAQLVGRICHFAQRRALDIEGLGEKLAAGLVERGQVKDFADLYAVPFEVWQQLFSRPRKEQDAGAARELPEKSAQNMVAALERSRSTTLRRFLFALGIPQVGEATAATLARHFGDLARILDADEEALKGVRDVGPETASEIRAWTQEPQNRRVVERLLAAGVRPEPEVVEARGPFAGKTVVLTGGLSAMSRDDAKAEVERRGGKVSGSVSRKTDLVVAGEEAGSKLEKARSLGVRVVGEEEFVRLLKE.

NAD(+) is bound by residues 34 to 38 (DAEYD), 83 to 84 (SL), and glutamate 117. Lysine 119 acts as the N6-AMP-lysine intermediate in catalysis. NAD(+) contacts are provided by arginine 140, glutamate 182, lysine 298, and lysine 322. Cysteine 416, cysteine 419, cysteine 434, and cysteine 439 together coordinate Zn(2+). Positions 609–687 (EARGPFAGKT…EEEFVRLLKE (79 aa)) constitute a BRCT domain.

This sequence belongs to the NAD-dependent DNA ligase family. LigA subfamily. Requires Mg(2+) as cofactor. The cofactor is Mn(2+).

The enzyme catalyses NAD(+) + (deoxyribonucleotide)n-3'-hydroxyl + 5'-phospho-(deoxyribonucleotide)m = (deoxyribonucleotide)n+m + AMP + beta-nicotinamide D-nucleotide.. Its function is as follows. DNA ligase that catalyzes the formation of phosphodiester linkages between 5'-phosphoryl and 3'-hydroxyl groups in double-stranded DNA using NAD as a coenzyme and as the energy source for the reaction. It is essential for DNA replication and repair of damaged DNA. The sequence is that of DNA ligase from Anaeromyxobacter dehalogenans (strain 2CP-C).